Reading from the N-terminus, the 431-residue chain is 3-deoxy-D-manno-octulosonic acid transferase (431 aa).

Residues 5 to 27 (WLTSRLYDAFLVCAFFVSAPRIF) traverse the membrane as a helical; Signal-anchor segment. The active-site Proton acceptor is the E67. CMP is bound by residues 275 to 276 (PR), 315 to 317 (MGV), and 342 to 345 (NLLE).

It belongs to the glycosyltransferase group 1 family. Glycosyltransferase 30 subfamily.

The protein localises to the cell inner membrane. It catalyses the reaction lipid IVA (E. coli) + CMP-3-deoxy-beta-D-manno-octulosonate = alpha-Kdo-(2-&gt;6)-lipid IVA (E. coli) + CMP + H(+). The catalysed reaction is alpha-Kdo-(2-&gt;6)-lipid IVA (E. coli) + CMP-3-deoxy-beta-D-manno-octulosonate = alpha-Kdo-(2-&gt;4)-alpha-Kdo-(2-&gt;6)-lipid IVA (E. coli) + CMP + H(+). It carries out the reaction alpha-Kdo-(2-&gt;4)-alpha-Kdo-(2-&gt;6)-lipid IVA (E. coli) + CMP-3-deoxy-beta-D-manno-octulosonate = alpha-Kdo-(2-&gt;8)-alpha-Kdo-(2-&gt;4)-alpha-Kdo-(2-&gt;6)-lipid IVA (E. coli) + CMP + H(+). The protein operates within bacterial outer membrane biogenesis; LPS core biosynthesis. Involved in lipopolysaccharide (LPS) biosynthesis. Catalyzes the transfer of three 3-deoxy-D-manno-octulosonate (Kdo) residues from CMP-Kdo to lipid IV(A), the tetraacyldisaccharide-1,4'-bisphosphate precursor of lipid A. Thus generates the genus-specific LPS epitope of Chlamydia, composed of the trisaccharide alpha-Kdo-(2-&gt;8)-alpha-Kdo-(2-&gt;4)-alpha-Kdo. The chain is 3-deoxy-D-manno-octulosonic acid transferase (waaA) from Chlamydia trachomatis serovar A (strain ATCC VR-571B / DSM 19440 / HAR-13).